We begin with the raw amino-acid sequence, 63 residues long: Large ribosomal subunit protein uL30 (63 aa).

Belongs to the universal ribosomal protein uL30 family. As to quaternary structure, part of the 50S ribosomal subunit.

This Rickettsia massiliae (strain Mtu5) protein is Large ribosomal subunit protein uL30.